The primary structure comprises 592 residues: Monocopper oxidase-like protein SKS2 (592 aa).

The N-terminal stretch at 1 to 23 is a signal peptide; that stretch reads MAATDFFFAFVFSFALIFGFSFA. Asn61, Asn110, Asn172, Asn203, Asn259, Asn280, Asn295, Asn344, Asn364, Asn433, and Asn447 each carry an N-linked (GlcNAc...) asparagine glycan. A Cu cation-binding site is contributed by His455. Asn476 and Asn536 each carry an N-linked (GlcNAc...) asparagine glycan. A lipid anchor (GPI-anchor amidated serine) is attached at Ser564. Residues 565-592 constitute a propeptide, removed in mature form; it reads ATKSMTNGQLILIFSMMMVLLSSFSSFC.

Belongs to the multicopper oxidase family. Requires Cu cation as cofactor.

Its subcellular location is the cell membrane. The protein is Monocopper oxidase-like protein SKS2 (SKS2) of Arabidopsis thaliana (Mouse-ear cress).